The sequence spans 3032 residues: DmX-like protein 2 (3032 aa).

WD repeat units lie at residues 108–145, 167–207, and 230–278; these read FLSS…ILEE, KTSV…KSSI, and AHPR…EDCL. Serine 326 is subject to Phosphoserine. The tract at residues 418–486 is disordered; that stretch reads QLDHESDDAD…HPRPSISMPL (69 aa). Positions 422–434 are enriched in acidic residues; the sequence is ESDDADREDEERS. Over residues 435-474 the composition is skewed to basic and acidic residues; it reads QDERERGLRMKLDHELSLDRESEAGTGSSEHEDGEREGSP. Serine 473 is subject to Phosphoserine. One copy of the WD 4 repeat lies at 492-532; it reads DRKIETLLTEWNKNPDMLFTIHPVDGTFLVWHVKYLDEYNP. Residues 577–598 are disordered; it reads PSQQEMMSVDSPHGSQLHSPSH. The residue at position 587 (serine 587) is a Phosphoserine. Positions 589-598 are enriched in polar residues; the sequence is HGSQLHSPSH. 3 WD repeats span residues 594–633, 750–802, and 879–921; these read HSPS…KSAF, LHTS…RKLL, and QPSQ…VQAC. Positions 937–958 are disordered; that stretch reads VPGQKNLDSSPETSSSMSSVPH. Residues serine 945 and serine 946 each carry the phosphoserine modification. Low complexity predominate over residues 945 to 958; the sequence is SSPETSSSMSSVPH. One copy of the WD 8 repeat lies at 1001 to 1038; the sequence is LSSSSIYPVCLAPYLVVTTCSDNKVRFWKCCMETNSLG. Phosphoserine is present on residues serine 1141, serine 1144, and serine 1152. WD repeat units follow at residues 1164 to 1205 and 1245 to 1285; these read PNIK…VSDQ and GTPS…GNVD. Phosphoserine is present on residues serine 1288 and serine 1399. Threonine 1416 carries the phosphothreonine modification. Residues 1443–1464 form a disordered region; sequence RISEDSTKKPQSYEDHIESQSE. Over residues 1444 to 1461 the composition is skewed to basic and acidic residues; sequence ISEDSTKKPQSYEDHIES. Phosphoserine is present on serine 1856. The segment at 1922–1953 is disordered; sequence QLDSVSGRMENGPSESKPVSRSDGGSGADWSA. At threonine 2017 the chain carries Phosphothreonine. The stretch at 2117–2146 forms a coiled coil; that stretch reads GSYERHQIERRRLQAKREHAERRKLWLQKN. Residues serine 2394 and serine 2636 each carry the phosphoserine modification. Over residues 2722-2732 the composition is skewed to low complexity; sequence QPGAASHSSSQ. Positions 2722-2744 are disordered; sequence QPGAASHSSSQPHPPPSLPWLGS. 6 WD repeats span residues 2757–2796, 2800–2839, 2846–2888, 2894–2933, 2936–2975, and 2988–3026; these read RNLH…QLVC, AGNA…SNPK, CHSK…GNSL, CHDH…LIHT, AHDS…LIHS, and NIGA…NIPN.

In terms of assembly, interacts with MADD and RAB3GAP. As to expression, expressed in the brain and pituitary gland. Detected in the hippocampus, dentate gyrus, hypothalamus, pyriform cortex and the granular and molecular layers of the cerebellum of adult animals. In the hypothalamus, expression is observed in the arcuate nucleus, the ME, the organum vasculosum of the lamina terminalis, and the subfornical organ, the subcommissural organ, and the suprachiasmatic nucleus. Both tanycytes and hypothalamic neurosecretory neurons express the protein. Expressed in the inner and outer hair cells as well as in the spiral ganglion neurons. Expressed in insulin-secreting cells of the islets of Langerhans in the pancreas.

It is found in the cytoplasmic vesicle. The protein resides in the secretory vesicle. The protein localises to the synaptic vesicle membrane. Its subcellular location is the neuronal dense core vesicle. May serve as a scaffold protein for MADD and RAB3GA on synaptic vesicles of neuronal and endocrine homeostatic processes. Plays a role in the brain as a key controller of neuronal and endocrine homeostatic processes. The sequence is that of DmX-like protein 2 (Dmxl2) from Mus musculus (Mouse).